The following is a 432-amino-acid chain: Adenylosuccinate synthetase (432 aa).

GTP-binding positions include 13–19 and 41–43; these read GDEGKGK and GHT. Residue Asp14 is the Proton acceptor of the active site. Mg(2+) contacts are provided by Asp14 and Gly41. IMP is bound by residues 14-17, 39-42, Thr130, Arg144, Gln225, Thr240, and Arg304; these read DEGK and NAGH. The active-site Proton donor is His42. 300–306 lines the substrate pocket; the sequence is ATTGRRR. GTP contacts are provided by residues Arg306, 332 to 334, and 415 to 417; these read KLD and STG.

It belongs to the adenylosuccinate synthetase family. Homodimer. It depends on Mg(2+) as a cofactor.

Its subcellular location is the cytoplasm. The enzyme catalyses IMP + L-aspartate + GTP = N(6)-(1,2-dicarboxyethyl)-AMP + GDP + phosphate + 2 H(+). It participates in purine metabolism; AMP biosynthesis via de novo pathway; AMP from IMP: step 1/2. Functionally, plays an important role in the de novo pathway of purine nucleotide biosynthesis. Catalyzes the first committed step in the biosynthesis of AMP from IMP. The sequence is that of Adenylosuccinate synthetase from Salmonella paratyphi C (strain RKS4594).